Consider the following 887-residue polypeptide: Alanine--tRNA ligase (887 aa).

Residues histidine 581, histidine 585, cysteine 683, and histidine 687 each coordinate Zn(2+).

This sequence belongs to the class-II aminoacyl-tRNA synthetase family. Zn(2+) serves as cofactor.

The protein resides in the cytoplasm. The enzyme catalyses tRNA(Ala) + L-alanine + ATP = L-alanyl-tRNA(Ala) + AMP + diphosphate. Functionally, catalyzes the attachment of alanine to tRNA(Ala) in a two-step reaction: alanine is first activated by ATP to form Ala-AMP and then transferred to the acceptor end of tRNA(Ala). Also edits incorrectly charged Ser-tRNA(Ala) and Gly-tRNA(Ala) via its editing domain. The sequence is that of Alanine--tRNA ligase from Ehrlichia chaffeensis (strain ATCC CRL-10679 / Arkansas).